A 409-amino-acid chain; its full sequence is Calsequestrin-2 (409 aa).

The signal sequence occupies residues 1-19 (MKRAHLFVVGVYLLSSCRA). Phosphotyrosine is present on Y282. A glycan (N-linked (GlcNAc...) asparagine) is linked at N335. The interval 364 to 409 (DVLSGKINTEDDDNEDEDDDDDNDDDDDDNGNSDEEDNDDSDEDDE) is disordered. Positions 373-409 (EDDDNEDEDDDDDNDDDDDDNGNSDEEDNDDSDEDDE) are enriched in acidic residues.

This sequence belongs to the calsequestrin family. In terms of assembly, monomer, homodimer and homooligomer. Mostly monomeric in the absence of calcium. Forms higher oligomers in a calcium-dependent manner. Dimers associate to form tetramers, that then form linear homomer chains. Interacts with ASPH and TRDN. Phosphorylation in the C-terminus, probably by CK2, moderately increases calcium buffering capacity. In terms of processing, N-glycosylated. Detected in heart muscle (at protein level).

Its subcellular location is the sarcoplasmic reticulum lumen. Functionally, calsequestrin is a high-capacity, moderate affinity, calcium-binding protein and thus acts as an internal calcium store in muscle. Calcium ions are bound by clusters of acidic residues at the protein surface, especially at the interface between subunits. Can bind around 60 Ca(2+) ions. Regulates the release of lumenal Ca(2+) via the calcium release channel RYR2; this plays an important role in triggering muscle contraction. Plays a role in excitation-contraction coupling in the heart and in regulating the rate of heart beats. This chain is Calsequestrin-2 (CASQ2), found in Oryctolagus cuniculus (Rabbit).